Reading from the N-terminus, the 229-residue chain is UPF0758 protein Ppro_3582 (229 aa).

The interval 1-20 is disordered; that stretch reads MCPGIREWPEDERPREKMLR. A compositionally biased stretch (basic and acidic residues) spans 7–19; that stretch reads EWPEDERPREKML. Residues 107 to 229 enclose the MPN domain; it reads RFTSPRQVFD…YLSFVERGVL (123 aa). Residues His-178, His-180, and Asp-191 each contribute to the Zn(2+) site. The short motif at 178–191 is the JAMM motif element; the sequence is HNHPTGDPTPSQED.

Belongs to the UPF0758 family.

This is UPF0758 protein Ppro_3582 from Pelobacter propionicus (strain DSM 2379 / NBRC 103807 / OttBd1).